A 260-amino-acid chain; its full sequence is Creatinine amidohydrolase (260 aa).

E34 contributes to the Mn(2+) binding site. Positions 34, 36, and 45 each coordinate Zn(2+). Position 45 (D45) interacts with Mn(2+). S78 is a creatine binding site. H120 is a Mn(2+) binding site. Zn(2+) is bound at residue H120. Residues Y121, W174, D175, and H178 each coordinate creatine. E183 serves as a coordination point for Zn(2+).

Belongs to the creatininase superfamily. Homohexamer; trimer of dimers. Zn(2+) serves as cofactor. Mn(2+) is required as a cofactor.

It carries out the reaction creatinine + H2O = creatine. It participates in amine and polyamine degradation; creatinine degradation. Is markedly inactivated in vitro by heavy metal ions, N-bromosuccinimide, ethoxyformic anhydride, and dye-sensitized photooxidation. In terms of biological role, cyclic amidohydrolase that catalyzes the reversible conversion of creatinine to creatine. Is also active toward glycocyamidine, though the reaction rate is very low, but it is completely inert toward hydantoin and its derivatives. The polypeptide is Creatinine amidohydrolase (crnA) (Pseudomonas putida (Arthrobacter siderocapsulatus)).